Here is a 353-residue protein sequence, read N- to C-terminus: Photosystem II D2 protein (353 aa).

T2 is modified (N-acetylthreonine). Phosphothreonine is present on T2. Residues 41–61 (CAYFALGGWFTGTTFVTSWYT) form a helical membrane-spanning segment. H118 is a chlorophyll a binding site. Residues 125–141 (GFMLRQFELARSVQLRP) form a helical membrane-spanning segment. Pheophytin a-binding residues include Q130 and N143. The chain crosses the membrane as a helical span at residues 153 to 166 (VFVSVFLIYPLGQS). H198 lines the chlorophyll a pocket. The chain crosses the membrane as a helical span at residues 208–228 (AALLCAIHGATVENTLFEDGD). Residues H215 and F262 each coordinate a plastoquinone. H215 serves as a coordination point for Fe cation. H269 is a Fe cation binding site. The chain crosses the membrane as a helical span at residues 279-295 (GLWMSAIGVVGLALNLR).

The protein belongs to the reaction center PufL/M/PsbA/D family. PSII is composed of 1 copy each of membrane proteins PsbA, PsbB, PsbC, PsbD, PsbE, PsbF, PsbH, PsbI, PsbJ, PsbK, PsbL, PsbM, PsbT, PsbX, PsbY, PsbZ, Psb30/Ycf12, at least 3 peripheral proteins of the oxygen-evolving complex and a large number of cofactors. It forms dimeric complexes. Requires The D1/D2 heterodimer binds P680, chlorophylls that are the primary electron donor of PSII, and subsequent electron acceptors. It shares a non-heme iron and each subunit binds pheophytin, quinone, additional chlorophylls, carotenoids and lipids. There is also a Cl(-1) ion associated with D1 and D2, which is required for oxygen evolution. The PSII complex binds additional chlorophylls, carotenoids and specific lipids. as cofactor.

It localises to the plastid. The protein localises to the chloroplast thylakoid membrane. The enzyme catalyses 2 a plastoquinone + 4 hnu + 2 H2O = 2 a plastoquinol + O2. Its function is as follows. Photosystem II (PSII) is a light-driven water:plastoquinone oxidoreductase that uses light energy to abstract electrons from H(2)O, generating O(2) and a proton gradient subsequently used for ATP formation. It consists of a core antenna complex that captures photons, and an electron transfer chain that converts photonic excitation into a charge separation. The D1/D2 (PsbA/PsbD) reaction center heterodimer binds P680, the primary electron donor of PSII as well as several subsequent electron acceptors. D2 is needed for assembly of a stable PSII complex. This is Photosystem II D2 protein from Welwitschia mirabilis (Tree tumbo).